A 399-amino-acid chain; its full sequence is Elongation factor Tu (399 aa).

A tr-type G domain is found at 10–209; it reads NPHVNIGTIG…EVDSYIPTPE (200 aa). The G1 stretch occupies residues 19-26; it reads GHVYHGKT. Position 19–26 (19–26) interacts with GTP; that stretch reads GHVYHGKT. T26 is a binding site for Mg(2+). A G2 region spans residues 60-64; the sequence is GITIA. Positions 81 to 84 are G3; that stretch reads DCPG. GTP-binding positions include 81–85 and 136–139; these read DCPGH and NKQD. The interval 136 to 139 is G4; the sequence is NKQD. Positions 174 to 176 are G5; that stretch reads SAL.

It belongs to the TRAFAC class translation factor GTPase superfamily. Classic translation factor GTPase family. EF-Tu/EF-1A subfamily. Monomer.

It localises to the cytoplasm. It catalyses the reaction GTP + H2O = GDP + phosphate + H(+). Its function is as follows. GTP hydrolase that promotes the GTP-dependent binding of aminoacyl-tRNA to the A-site of ribosomes during protein biosynthesis. The protein is Elongation factor Tu of Helicobacter pylori (strain J99 / ATCC 700824) (Campylobacter pylori J99).